A 257-amino-acid chain; its full sequence is Histidine/lysine/arginine/ornithine transport ATP-binding protein HisP (257 aa).

One can recognise an ABC transporter domain in the interval 6 to 252 (LNVIDLHKRY…PQSPRLQRFL (247 aa)). ATP-binding residues include Ser40, Gly41, Gly43, Lys44, Ser45, and Thr46.

The protein belongs to the ABC transporter superfamily. In terms of assembly, the HisPMQJ complex is composed of two ATP-binding proteins (HisP), two transmembrane proteins (HisM and HisQ) and a solute-binding protein (HisJ). The HisPMQ-ArgT complex is composed of two ATP-binding proteins (HisP), two transmembrane proteins (HisM and HisQ) and a solute-binding protein (ArgT).

The protein resides in the cell inner membrane. It catalyses the reaction a polar amino acid(out) + ATP + H2O = a polar amino acid(in) + ADP + phosphate + H(+). It carries out the reaction L-histidine(out) + ATP + H2O = L-histidine(in) + ADP + phosphate + H(+). The enzyme catalyses L-lysine(out) + ATP + H2O = L-lysine(in) + ADP + phosphate + H(+). The catalysed reaction is L-arginine(out) + ATP + H2O = L-arginine(in) + ADP + phosphate + H(+). It catalyses the reaction L-ornithine(out) + ATP + H2O = L-ornithine(in) + ADP + phosphate + H(+). Its function is as follows. Part of the ABC transporter complex HisPMQJ involved in histidine transport. Is also part of the ABC transporter complex HisPMQ-ArgT involved in lysine/arginine/ornithine transport. Shows ATPase activity. Responsible for energy coupling to the transport system. The sequence is that of Histidine/lysine/arginine/ornithine transport ATP-binding protein HisP from Escherichia coli (strain K12).